The sequence spans 911 residues: Alpha-actinin-4 (911 aa).

The segment at methionine 1 to serine 269 is actin-binding. Residues glutamine 12–glycine 26 are interaction with VCL. Tyrosine 31 is subject to Phosphotyrosine. Residues arginine 40–asparagine 61 form an interaction with VCL region. 2 Calponin-homology (CH) domains span residues lysine 50–alanine 154 and threonine 163–serine 269. Positions leucine 84–leucine 88 match the LXXLL motif motif. The interval lysine 108 to leucine 126 is interaction with VCL. Position 114 is an N6-acetyllysine (lysine 114). The segment at threonine 177 to tryptophan 192 is polyphosphoinositide (PIP2)-binding. N6-acetyllysine is present on lysine 214. Threonine 249 is subject to Phosphothreonine. Spectrin repeat units lie at residues histidine 293–asparagine 403, histidine 413–lysine 518, glutamine 528–glutamate 639, and histidine 649–asparagine 752. Lysine 592 and lysine 625 each carry N6-acetyllysine. Serine 696 carries the post-translational modification Phosphoserine. Residues tryptophan 736 to leucine 911 form a mediates interaction with MICALL2 region. 2 consecutive EF-hand domains span residues glutamate 765–aspartate 800 and glutamine 806–aspartate 841. Aspartate 778 is a binding site for Ca(2+). Position 779 is an N6-acetyllysine (lysine 779). Ca(2+)-binding residues include aspartate 780 and glutamate 789. N6-acetyllysine is present on lysine 859. Serine 909 bears the Phosphoserine mark.

This sequence belongs to the alpha-actinin family. As to quaternary structure, homodimer; antiparallel. Binds TRIM3 at the N-terminus. Interacts with MICALL2 (preferentially in opened conformation); stimulated by RAB13 activation. Identified in a complex with CASK, IQGAP1, MAGI2, NPHS1, SPTAN1 and SPTBN1. Identified in a IGF2BP1-dependent mRNP granule complex containing untranslated mRNAs. Component of the CART complex, at least composed of ACTN4, HGS/HRS, MYO5B and TRIM3. Interacts with MAGI1. Interacts with PDLIM2. Interacts with PPARG and RARA. Binds to VCL; this interaction triggers VCL conformational changes. Interacts with SEPTIN14. Interacts with IGSF8. As to expression, widely expressed.

It localises to the nucleus. The protein resides in the cytoplasm. The protein localises to the cell junction. Its subcellular location is the cytoskeleton. It is found in the stress fiber. It localises to the perinuclear region. F-actin cross-linking protein which is thought to anchor actin to a variety of intracellular structures. This is a bundling protein. Probably involved in vesicular trafficking via its association with the CART complex. The CART complex is necessary for efficient transferrin receptor recycling but not for EGFR degradation. Involved in tight junction assembly in epithelial cells probably through interaction with MICALL2. Links MICALL2 to the actin cytoskeleton and recruits it to the tight junctions. May also function as a transcriptional coactivator, stimulating transcription mediated by the nuclear hormone receptors PPARG and RARA. Association with IGSF8 regulates the immune synapse formation and is required for efficient T-cell activation. This is Alpha-actinin-4 from Homo sapiens (Human).